The following is a 313-amino-acid chain: Ethylene-responsive transcription factor ERN2 (313 aa).

Basic and acidic residues predominate over residues 1 to 10 (MEIQFDEPKK). Residues 1–29 (MEIQFDEPKKSLRPKKVNKFKGRNKKSET) form a disordered region. Over residues 11–24 (SLRPKKVNKFKGRN) the composition is skewed to basic residues. Positions 32–89 (KFVGVRQRPSGRYVAEIKDTTQNIRMWLGTFETAEEAARAYDEAATLLRGSKTRTNFV) form a DNA-binding region, AP2/ERF. Disordered stretches follow at residues 108-143 (NRKKGTKQQDMNGISSTTSHADTTNDTTSDGSTSST) and 157-204 (TSAS…SSST). 2 stretches are compositionally biased toward low complexity: residues 122-143 (SSTTSHADTTNDTTSDGSTSST) and 157-193 (TSASGVTSTSTNISTSASGVASTSTDISTNSSNTNVN).

The protein belongs to the AP2/ERF transcription factor family. ERF subfamily. Expressed in roots, root hairs and leaves. Expressed in root epidermis and root hairs.

It localises to the nucleus. Functionally, transcription factor involved in symbiotic nodule signaling in response to rhizobial Nod factors (NFs). Binds to the GCC box (NF-responsive box) of ENOD11 promoter. Acts as a transcriptional activator of NF-responsive box-containing target gene promoters in root hairs. Involved in early stages of root nodule development. Functions redundantly with ERN1. Is essential with ERN1 for the initiation of root hair infection, and nodule organogenesis and development. Required for accurate expression of the NF signaling genes ENOD11 and ENOD12. The protein is Ethylene-responsive transcription factor ERN2 of Medicago truncatula (Barrel medic).